The sequence spans 315 residues: Calumenin-A (315 aa).

The signal sequence occupies residues 1–19 (MEIRPLLMCFALCVVYATS). 6 consecutive EF-hand domains span residues 68 to 103 (ESKNRLGKIVEKIDADEDGFVTEAELKAWIKKAQKK), 104 to 139 (YIYDNVERQWKDFDLNNDRMISWEEYKNVTYGTYLD), 151 to 186 (QMMARDERRFKMADGNGDHIADKEEFTAFLHPEEYE), 188 to 223 (MKDIVVLETMEDIDKNGDGFIDLEEYIGDMYNHEDE), 229 to 264 (WVATEREQFSEFRDKNKDGKMDREETMDWILPADYD), and 265 to 300 (HAEAEAKHLVYESDTNKDGKLTKEEILNKYDLFVGS). 9 residues coordinate Ca(2+): aspartate 81, aspartate 83, aspartate 85, glutamate 92, aspartate 117, asparagine 119, aspartate 121, methionine 123, and glutamate 128. Asparagine 131 is a glycosylation site (N-linked (GlcNAc...) asparagine). Ca(2+) is bound by residues aspartate 164, asparagine 166, aspartate 168, glutamate 175, aspartate 201, asparagine 203, aspartate 205, glutamate 212, aspartate 242, asparagine 244, aspartate 246, lysine 248, glutamate 253, aspartate 278, asparagine 280, aspartate 282, lysine 284, and glutamate 289. The Prevents secretion from ER motif lies at 312-315 (HDEF).

This sequence belongs to the CREC family. In terms of assembly, interacts with ggcx.

The protein localises to the endoplasmic reticulum membrane. Its subcellular location is the golgi apparatus. The protein resides in the secreted. It is found in the melanosome. It localises to the sarcoplasmic reticulum lumen. Its function is as follows. Involved in regulation of vitamin K-dependent carboxylation of multiple N-terminal glutamate residues. Seems to inhibit gamma-carboxylase ggcx. Binds 7 calcium ions with a low affinity. In Danio rerio (Zebrafish), this protein is Calumenin-A (calua).